Reading from the N-terminus, the 133-residue chain is Binder of sperm protein homolog 1 (133 aa).

The N-terminal stretch at 1–20 (MAQPLDFLLVSICLFHSLFS) is a signal peptide. Fibronectin type-II domains follow at residues 40–84 (TEDG…YCAL) and 85–133 (SDYA…YCIE). Intrachain disulfides connect Cys-45–Cys-69, Cys-59–Cys-82, Cys-90–Cys-116, and Cys-104–Cys-131. Asn-72 carries N-linked (GlcNAc...) asparagine glycosylation.

This sequence belongs to the seminal plasma protein family. Expressed only in the epididymis.

Its subcellular location is the secreted. Functionally, binds sperm in vitro and promotes sperm capacitation. Specifically promotes capacitation induced by high density lipoproteins (HDLs). Also binds heparin, phospholipid liposomes, and weakly to gelatin. Does not bind chondroitin sulfate B. This is Binder of sperm protein homolog 1 (Bsph1) from Mus musculus (Mouse).